We begin with the raw amino-acid sequence, 217 residues long: DNA transformation protein TfoX (217 aa).

This sequence belongs to the Sxy/TfoX family.

Its function is as follows. Required for DNA transformation. Positively regulates genes required for DNA transformation (late competence-specific genes) in association with CRP. Required for expression of the late competence-specific gene, com101A. Required for expression of the dprABC operon. The polypeptide is DNA transformation protein TfoX (Haemophilus influenzae (strain ATCC 51907 / DSM 11121 / KW20 / Rd)).